The following is a 179-amino-acid chain: Large ribosomal subunit protein uL5 (179 aa).

The protein belongs to the universal ribosomal protein uL5 family. As to quaternary structure, part of the 50S ribosomal subunit; part of the 5S rRNA/L5/L18/L25 subcomplex. Contacts the 5S rRNA and the P site tRNA. Forms a bridge to the 30S subunit in the 70S ribosome.

Functionally, this is one of the proteins that bind and probably mediate the attachment of the 5S RNA into the large ribosomal subunit, where it forms part of the central protuberance. In the 70S ribosome it contacts protein S13 of the 30S subunit (bridge B1b), connecting the 2 subunits; this bridge is implicated in subunit movement. Contacts the P site tRNA; the 5S rRNA and some of its associated proteins might help stabilize positioning of ribosome-bound tRNAs. This Burkholderia multivorans (strain ATCC 17616 / 249) protein is Large ribosomal subunit protein uL5.